A 335-amino-acid polypeptide reads, in one-letter code: Glucokinase (335 aa).

An ATP-binding site is contributed by 11 to 16; sequence ADIGGT.

Belongs to the bacterial glucokinase family.

The protein resides in the cytoplasm. The enzyme catalyses D-glucose + ATP = D-glucose 6-phosphate + ADP + H(+). This Stenotrophomonas maltophilia (strain K279a) protein is Glucokinase.